The chain runs to 257 residues: V-type proton ATPase subunit D (257 aa).

The segment at 215-257 is disordered; it reads KEQEAAQKALEGPGPGEDAAHSENNPPRNLLASEEDNLPVLFN.

This sequence belongs to the V-ATPase D subunit family. In terms of assembly, V-ATPase is a heteromultimeric enzyme made up of two complexes: the ATP-hydrolytic V1 complex and the proton translocation V0 complex. The V1 complex consists of three catalytic AB heterodimers that form a heterohexamer, three peripheral stalks each consisting of EG heterodimers, one central rotor including subunits D and F, and the regulatory subunits C and H. The proton translocation complex V0 consists of the proton transport subunit a, a ring of proteolipid subunits c9c'', rotary subunit d, subunits e and f, and the accessory subunits vah-19/Ac45 and vah-20/PRR.

Subunit of the V1 complex of vacuolar(H+)-ATPase (V-ATPase), a multisubunit enzyme composed of a peripheral complex (V1) that hydrolyzes ATP and a membrane integral complex (V0) that translocates protons. V-ATPase is responsible for acidifying and maintaining the pH of intracellular compartments and in some cell types, is targeted to the plasma membrane, where it is responsible for acidifying the extracellular environment. The chain is V-type proton ATPase subunit D from Caenorhabditis elegans.